We begin with the raw amino-acid sequence, 258 residues long: uncharacterized protein (258 aa).

36–43 (GKAGTGKS) contacts ATP.

It belongs to the IIV-6 075L family.

This is an uncharacterized protein from Acheta domesticus (House cricket).